The chain runs to 141 residues: VLSSTDKSNVKAAWDKVGGNVGEYGAEALERMFLSFPTTKTYFPHFDLAHGSSQVKAHGKKVGDALTNAVGHIDDLPGALSALSDLHAYKLRVDPVNFKLLSHCLLVTLASHLPSDFTPAVHASLDKFLASVSTVLTSKYR.

One can recognise a Globin domain in the interval 1–141 (VLSSTDKSNV…VSTVLTSKYR (141 aa)). A Phosphoserine modification is found at serine 3. Residues lysine 7 and lysine 11 each carry the N6-succinyllysine modification. Lysine 16 is modified (N6-acetyllysine; alternate). Position 16 is an N6-succinyllysine; alternate (lysine 16). Phosphotyrosine is present on tyrosine 24. Serine 35 bears the Phosphoserine mark. Lysine 40 bears the N6-succinyllysine mark. Histidine 58 lines the O2 pocket. Histidine 87 is a heme b binding site. Serine 102 is subject to Phosphoserine. At threonine 108 the chain carries Phosphothreonine. A phosphoserine mark is found at serine 124 and serine 131. A phosphothreonine mark is found at threonine 134 and threonine 137. Residue serine 138 is modified to Phosphoserine.

Belongs to the globin family. Heterotetramer of two alpha chains and two beta chains. As to expression, red blood cells.

Its function is as follows. Involved in oxygen transport from the lung to the various peripheral tissues. Hemopressin acts as an antagonist peptide of the cannabinoid receptor CNR1. Hemopressin-binding efficiently blocks cannabinoid receptor CNR1 and subsequent signaling. In Pteropus vampyrus (Large flying fox), this protein is Hemoglobin subunit alpha.